A 273-amino-acid polypeptide reads, in one-letter code: F-actin-capping protein subunit alpha (273 aa).

This sequence belongs to the F-actin-capping protein alpha subunit family. In terms of assembly, heterodimer of an alpha and a beta subunit.

The protein localises to the cytoplasm. It localises to the cytoskeleton. F-actin-capping proteins bind in a Ca(2+)-independent manner to the fast growing ends of actin filaments (barbed end) thereby blocking the exchange of subunits at these ends. Unlike other capping proteins (such as gelsolin and severin), these proteins do not sever actin filaments. The polypeptide is F-actin-capping protein subunit alpha (cap1) (Emericella nidulans (strain FGSC A4 / ATCC 38163 / CBS 112.46 / NRRL 194 / M139) (Aspergillus nidulans)).